Reading from the N-terminus, the 89-residue chain is Cell division topological specificity factor (89 aa).

Belongs to the MinE family.

Its function is as follows. Prevents the cell division inhibition by proteins MinC and MinD at internal division sites while permitting inhibition at polar sites. This ensures cell division at the proper site by restricting the formation of a division septum at the midpoint of the long axis of the cell. The polypeptide is Cell division topological specificity factor (Clostridium beijerinckii (strain ATCC 51743 / NCIMB 8052) (Clostridium acetobutylicum)).